The chain runs to 337 residues: MTNNSGSKAELVVGGKYKLVRKIGSGSFGDVYLGITTTNGEDVAVKLESQKVKHPQLLYESKLYTILQGGVGIPHMHWYGQEKDNNVLVMDLLGPSLEDLFNFCSRRFTMKTVLMLADQMISRIEYVHTKNFLHRDIKPDNFLMGTGRHCNKLFLIDFGLAKKYRDNRTRQHIPYREDKHLIGTVRYASINAHLGIEQSRRDDMESLGYVFMYFNRTSLPWQGLRAMTKKQKYEKISEKKMSTPVEVLCKGFPAEFAMYLNYCRGLRFEEVPDYMYLRQLFRILFRTLNHQYDYTFDWTMLKQKAAQQAASSSGQGQQAQTQTGKQTEKNKNNVKDN.

An N6-acetyllysine modification is found at Lys8. Residues 17 to 285 form the Protein kinase domain; it reads YKLVRKIGSG…YLRQLFRILF (269 aa). Residues 23–31 and Lys46 each bind ATP; that span reads IGSGSFGDV. The active-site Proton acceptor is Asp136. The segment covering 309 to 325 has biased composition (low complexity); that stretch reads AASSSGQGQQAQTQTGK. A disordered region spans residues 309–337; sequence AASSSGQGQQAQTQTGKQTEKNKNNVKDN. A compositionally biased stretch (basic and acidic residues) spans 326–337; the sequence is QTEKNKNNVKDN.

It belongs to the protein kinase superfamily. CK1 Ser/Thr protein kinase family. Casein kinase I subfamily. As to quaternary structure, interacts with FAM83A, FAM83B, FAM83C, FAM83D, FAM83E, FAM83F, FAM83G and FAM83H (via DUF1669).

The protein localises to the cytoplasm. It carries out the reaction L-seryl-[protein] + ATP = O-phospho-L-seryl-[protein] + ADP + H(+). The catalysed reaction is L-threonyl-[protein] + ATP = O-phospho-L-threonyl-[protein] + ADP + H(+). Its function is as follows. Casein kinases are operationally defined by their preferential utilization of acidic proteins such as caseins as substrates. It can phosphorylate a large number of proteins. Participates in Wnt signaling. The protein is Casein kinase I isoform alpha-like (CSNK1A1L) of Homo sapiens (Human).